A 1164-amino-acid chain; its full sequence is MKAPSSNGVSPNPVEGERRNINSELWHACAGPLISLPPAGSLVVYFPQGHSEQVAASMQKQTDFIPSYPNLPSKLICMLHNVTLNADPETDEVYAQMTLQPVNKYDRDALLASDMGLKLNRQPNEFFCKTLTASDTSTHGGFSVPRRAAEKIFPALDFSMQPPCQELVAKDIHDNTWTFRHIYRGQPKRHLLTTGWSVFVSTKRLFAGDSVLFIRDGKAQLLLGIRRANRQQPALSSSVISSDSMHIGVLAAAAHANANNSPFTIFYNPRAAPAEFVVPLAKYTKAMYAQVSLGMRFRMIFETEECGVRRYMGTVTGISDLDPVRWKNSQWRNLQIGWDESAAGDRPSRVSVWDIEPVLTPFYICPPPFFRPRFSGQPGMPDDETDMESALKRAMPWLDNSLEMKDPSSTIFPGLSLVQWMNMQQQNGQLPSAAAQPGFFPSMLSPTAALHNNLGGTDDPSKLLSFQTPHGGISSSNLQFNKQNQQAPMSQLPQPPTTLSQQQQLQQLLHSSLNHQQQQSQSQQQQQQQQLLQQQQQLQSQQHSNNNQSQSQQQQQLLQQQQQQQLQQQHQQPLQQQTQQQQLRTQPLQSHSHPQPQQLQQHKLQQLQVPQNQLYNGQQAAQQHQSQQASTHHLQPQLVSGSMASSVITPPSSSLNQSFQQQQQQSKQLQQAHHHLGASTSQSSVIETSKSSSNLMSAPPQETQFSRQVEQQQPPGLNGQNQQTLLQQKAHQAQAQQIFQQSLLEQPHIQFQLLQRLQQQQQQQFLSPQSQLPHHQLQSQQLQQLPTLSQGHQFPSSCTNNGLSTLQPPQMLVSRPQEKQNPPVGGGVKAYSGITDGGDAPSSSTSPSTNNCQISSSGFLNRSQSGPAILIPDAAIDMSGNLVQDLYSKSDMRLKQELVGQQKSKASLTDHQLEASASGTSYGLDGGENNRQQNFLAPTFGLDGDSRNSLLGGANVDNGFVPDTLLSRGYDSQKDLQNMLSNYGGVTNDIGTEMSTSAVRTQSFGVPNVPAISNDLAVNDAGVLGGGLWPAQTQRMRTYTKVQKRGSVGRSIDVNRYRGYDELRHDLARMFGIEGQLEDPQTSDWKLVYVDHENDILLVGDDPWEEFVNCVQSIKILSSAEVQQMSLDGNFAGVPVTNQACSGGDSGNAWRGHYDDNSATSFNR.

The segment at residues 127–229 (FCKTLTASDT…QLLLGIRRAN (103 aa)) is a DNA-binding region (TF-B3). 5 disordered regions span residues 451–505 (HNNL…QQQL), 536–555 (QQLQ…QQQQ), 570–728 (HQQP…LLQQ), 765–858 (FLSP…SSSG), and 903–930 (KSKA…GENN). Polar residues predominate over residues 464–489 (LSFQTPHGGISSSNLQFNKQNQQAPM). Low complexity predominate over residues 570–635 (HQQPLQQQTQ…SQQASTHHLQ (66 aa)). Residues 637 to 651 (QLVSGSMASSVITPP) show a composition bias toward polar residues. The span at 652 to 671 (SSSLNQSFQQQQQQSKQLQQ) shows a compositional bias: low complexity. The segment covering 678–710 (ASTSQSSVIETSKSSSNLMSAPPQETQFSRQVE) has biased composition (polar residues). Composition is skewed to low complexity over residues 711–728 (QQQP…LLQQ) and 765–790 (FLSP…TLSQ). The span at 791–808 (GHQFPSSCTNNGLSTLQP) shows a compositional bias: polar residues. The span at 841-851 (PSSSTSPSTNN) shows a compositional bias: low complexity. The span at 903–921 (KSKASLTDHQLEASASGTS) shows a compositional bias: polar residues. The 94-residue stretch at 1037–1130 (RTYTKVQKRG…EVQQMSLDGN (94 aa)) folds into the PB1 domain. Positions 1145–1164 (DSGNAWRGHYDDNSATSFNR) are disordered.

The protein belongs to the ARF family. As to quaternary structure, homodimers and heterodimers. Interacts with the auxin-responsive proteins IAA1 and IAA12 (BODENLOS). Interacts (via PB1 domain) with IAA17 (via PB1 domain). Interacts with IAA19. Interacts with ARF5. Binds to JMJ30. Binds to ATXR2 in the nucleus. In terms of tissue distribution, expressed in the whole plant.

It is found in the nucleus. Functionally, auxin response factors (ARFs) are transcriptional factors that bind specifically to the DNA sequence 5'-TGTCTC-3' found in the auxin-responsive promoter elements (AuxREs). Acts as a transcriptional activator of several tropic stimulus-induced (TSI) genes, including SAUR50. Formation of heterodimers with Aux/IAA proteins may alter their ability to modulate early auxin response genes expression. Required for differential growth responses of aerial tissues. Involved in ethylene responses. Regulates lateral root formation through direct regulation of LBD16 and/or LBD29. Functionally redundant with ARF19. Mediates embryo axis formation and vascular tissues differentiation. Functionally redundant with ARF5. Involved in cellular dedifferentiation during callus formation on callus-inducing medium (CIM) and in an ATXR2-dependent manner. This Arabidopsis thaliana (Mouse-ear cress) protein is Auxin response factor 7.